A 148-amino-acid polypeptide reads, in one-letter code: MVEWTDAERTAILGLWGKLNIDEIGPQALSRCLIVYPWTQRYFATFGNLSSPAAIMGNPKVAAHGRTVMGGLERAIKNMDNIKNTYAALSVMHSEKLHVDPDNFKLLADCITVCAAMKFGQAGFNADIQEAWQKFLAVVVSALCRQYH.

Residues 3–148 enclose the Globin domain; it reads EWTDAERTAI…VVSALCRQYH (146 aa). Heme b-binding residues include His64 and His93.

As to quaternary structure, heterotetramer of two alpha chains and two beta chains. Red blood cells.

Its function is as follows. Involved in oxygen transport from gills to the various peripheral tissues. The sequence is that of Hemoglobin subunit beta-2 (ba2) from Danio rerio (Zebrafish).